Here is a 90-residue protein sequence, read N- to C-terminus: Gene 56 protein (90 aa).

A Glutaredoxin domain is found at 1 to 90 (MRTMFTPITI…DYYTASETGL (90 aa)). An intrachain disulfide couples C16 to C19.

The polypeptide is Gene 56 protein (56) (Mycobacterium phage D29 (Mycobacteriophage D29)).